The sequence spans 267 residues: Small ribosomal subunit protein uS5 (267 aa).

The interval 1 to 37 is disordered; that stretch reads MADEAPARSGFRGGFGSRGGRGGRGRGRGRWARGRGK. The span at 11-20 shows a compositional bias: gly residues; it reads FRGGFGSRGG. A compositionally biased stretch (basic residues) spans 21–34; it reads RGGRGRGRGRWARG. At S60 the chain carries Phosphoserine. In terms of domain architecture, S5 DRBM spans 85-148; sequence LKDEVLKIMP…ILAKLSVVPV (64 aa).

It belongs to the universal ribosomal protein uS5 family.

In terms of biological role, component of the ribosome, a large ribonucleoprotein complex responsible for the synthesis of proteins in the cell. The small ribosomal subunit (SSU) binds messenger RNAs (mRNAs) and translates the encoded message by selecting cognate aminoacyl-transfer RNA (tRNA) molecules. The large subunit (LSU) contains the ribosomal catalytic site termed the peptidyl transferase center (PTC), which catalyzes the formation of peptide bonds, thereby polymerizing the amino acids delivered by tRNAs into a polypeptide chain. The nascent polypeptides leave the ribosome through a tunnel in the LSU and interact with protein factors that function in enzymatic processing, targeting, and the membrane insertion of nascent chains at the exit of the ribosomal tunnel. Plays a role in the assembly and function of the 40S ribosomal subunit. Mutations in this protein affects the control of translational fidelity. Involved in nucleolar processing of pre-18S ribosomal RNA and ribosome assembly. Has a specific developmental role during oogenesis. This Drosophila melanogaster (Fruit fly) protein is Small ribosomal subunit protein uS5 (RpS2).